A 256-amino-acid polypeptide reads, in one-letter code: Imidazole glycerol phosphate synthase subunit HisF (256 aa).

Residues aspartate 11 and aspartate 130 contribute to the active site.

It belongs to the HisA/HisF family. Heterodimer of HisH and HisF.

The protein localises to the cytoplasm. It carries out the reaction 5-[(5-phospho-1-deoxy-D-ribulos-1-ylimino)methylamino]-1-(5-phospho-beta-D-ribosyl)imidazole-4-carboxamide + L-glutamine = D-erythro-1-(imidazol-4-yl)glycerol 3-phosphate + 5-amino-1-(5-phospho-beta-D-ribosyl)imidazole-4-carboxamide + L-glutamate + H(+). Its pathway is amino-acid biosynthesis; L-histidine biosynthesis; L-histidine from 5-phospho-alpha-D-ribose 1-diphosphate: step 5/9. Functionally, IGPS catalyzes the conversion of PRFAR and glutamine to IGP, AICAR and glutamate. The HisF subunit catalyzes the cyclization activity that produces IGP and AICAR from PRFAR using the ammonia provided by the HisH subunit. The chain is Imidazole glycerol phosphate synthase subunit HisF from Prochlorococcus marinus (strain MIT 9312).